The sequence spans 150 residues: 3-hydroxyacyl-[acyl-carrier-protein] dehydratase FabZ (150 aa).

Residue histidine 54 is part of the active site.

It belongs to the thioester dehydratase family. FabZ subfamily.

It is found in the cytoplasm. The catalysed reaction is a (3R)-hydroxyacyl-[ACP] = a (2E)-enoyl-[ACP] + H2O. Involved in unsaturated fatty acids biosynthesis. Catalyzes the dehydration of short chain beta-hydroxyacyl-ACPs and long chain saturated and unsaturated beta-hydroxyacyl-ACPs. The chain is 3-hydroxyacyl-[acyl-carrier-protein] dehydratase FabZ from Psychromonas ingrahamii (strain DSM 17664 / CCUG 51855 / 37).